The sequence spans 474 residues: MKLTLWLVLGAVGVGAVGTGVGFGTKYFLDHKAKSNVDVAFKQRSLRKQVNVGFWNALNFLGSERSFGNQNSKVKTKGIAEIINLLKYDIVGLAEIQPSTESTAERFVDQLNEYADPYTSWSYDLSPVTTSKTASEGQKERILIVYNSQSVKMEGQGWFYDNPEMDISNYVSDGSSSKTRTPKKTKTSKKKPIKKKSSKSKSSKGSKKQKTTNESESETLELKLEQRRVTTRSQSKQQKGQEQATDQTDSEGVTTEEGADNTDTELVETTAETTEQEATTKSTKDTKETKDRTKVDWSRPPYSAEFSTQKGKVVVAFGHFDSPGANTKRGEKIAKMGKGQGAHEYFEAQTTFKAMDSIKQHFNNENILFMADTNIKFGNQAAAFGESKDYTFLTEDNEAWKSSLGTKSGYANPYDKIITSNSFKNKVLDQAETYWNYFDRYLKTKGHNSYLFDLASWGTKPRTISDHAPVGVLF.

The chain crosses the membrane as a helical span at residues 3–23; that stretch reads LTLWLVLGAVGVGAVGTGVGF. The interval 171–296 is disordered; the sequence is VSDGSSSKTR…KETKDRTKVD (126 aa). Positions 180–210 are enriched in basic residues; it reads RTPKKTKTSKKKPIKKKSSKSKSSKGSKKQK. A compositionally biased stretch (polar residues) spans 231–253; sequence TRSQSKQQKGQEQATDQTDSEGV. A compositionally biased stretch (acidic residues) spans 257-266; it reads EGADNTDTEL. Positions 267–281 are enriched in low complexity; sequence VETTAETTEQEATTK. A compositionally biased stretch (basic and acidic residues) spans 282-296; the sequence is STKDTKETKDRTKVD.

Its subcellular location is the membrane. This is an uncharacterized protein from Mycoplasma pneumoniae (strain ATCC 29342 / M129 / Subtype 1) (Mycoplasmoides pneumoniae).